A 529-amino-acid chain; its full sequence is Bifunctional purine biosynthesis protein PurH (529 aa).

The 148-residue stretch at 1 to 148 (MQQRRPVRRA…KNHKDVAIVV (148 aa)) folds into the MGS-like domain.

It belongs to the PurH family.

The enzyme catalyses (6R)-10-formyltetrahydrofolate + 5-amino-1-(5-phospho-beta-D-ribosyl)imidazole-4-carboxamide = 5-formamido-1-(5-phospho-D-ribosyl)imidazole-4-carboxamide + (6S)-5,6,7,8-tetrahydrofolate. The catalysed reaction is IMP + H2O = 5-formamido-1-(5-phospho-D-ribosyl)imidazole-4-carboxamide. The protein operates within purine metabolism; IMP biosynthesis via de novo pathway; 5-formamido-1-(5-phospho-D-ribosyl)imidazole-4-carboxamide from 5-amino-1-(5-phospho-D-ribosyl)imidazole-4-carboxamide (10-formyl THF route): step 1/1. It functions in the pathway purine metabolism; IMP biosynthesis via de novo pathway; IMP from 5-formamido-1-(5-phospho-D-ribosyl)imidazole-4-carboxamide: step 1/1. In Salmonella schwarzengrund (strain CVM19633), this protein is Bifunctional purine biosynthesis protein PurH.